Consider the following 321-residue polypeptide: Cytochrome f (321 aa).

A signal peptide spans 1 to 38 (MKKNFYTISKTMSRSLKLILFSVFIGFSIFLIPQPTWA). Tyr-39, Cys-59, Cys-62, and His-63 together coordinate heme. A helical membrane pass occupies residues 288-308 (VIGMIIFFIGVGLSQIMLVLK).

Belongs to the cytochrome f family. As to quaternary structure, the 4 large subunits of the cytochrome b6-f complex are cytochrome b6, subunit IV (17 kDa polypeptide, PetD), cytochrome f and the Rieske protein, while the 4 small subunits are PetG, PetL, PetM and PetN. The complex functions as a dimer. Heme is required as a cofactor.

It is found in the cellular thylakoid membrane. Functionally, component of the cytochrome b6-f complex, which mediates electron transfer between photosystem II (PSII) and photosystem I (PSI), cyclic electron flow around PSI, and state transitions. This chain is Cytochrome f, found in Prochlorococcus marinus (strain NATL2A).